A 239-amino-acid chain; its full sequence is Ribosomal RNA large subunit methyltransferase E (239 aa).

Residues Met-1 to Lys-20 are disordered. Over residues Thr-11–Lys-20 the composition is skewed to basic residues. Positions 81, 83, 104, 120, and 144 each coordinate S-adenosyl-L-methionine. The active-site Proton acceptor is Lys-184.

Belongs to the class I-like SAM-binding methyltransferase superfamily. RNA methyltransferase RlmE family.

Its subcellular location is the cytoplasm. It catalyses the reaction uridine(2552) in 23S rRNA + S-adenosyl-L-methionine = 2'-O-methyluridine(2552) in 23S rRNA + S-adenosyl-L-homocysteine + H(+). Specifically methylates the uridine in position 2552 of 23S rRNA at the 2'-O position of the ribose in the fully assembled 50S ribosomal subunit. This is Ribosomal RNA large subunit methyltransferase E from Rhizobium johnstonii (strain DSM 114642 / LMG 32736 / 3841) (Rhizobium leguminosarum bv. viciae).